A 122-amino-acid chain; its full sequence is UPF0102 protein XOO3839 (122 aa).

It belongs to the UPF0102 family.

This Xanthomonas oryzae pv. oryzae (strain KACC10331 / KXO85) protein is UPF0102 protein XOO3839.